A 152-amino-acid chain; its full sequence is Large ribosomal subunit protein bL9 (152 aa).

Belongs to the bacterial ribosomal protein bL9 family.

In terms of biological role, binds to the 23S rRNA. This chain is Large ribosomal subunit protein bL9, found in Mycoplasmopsis synoviae (strain 53) (Mycoplasma synoviae).